The sequence spans 265 residues: uncharacterized protein (265 aa).

This is an uncharacterized protein from Saccharolobus islandicus (Sulfolobus islandicus).